A 282-amino-acid polypeptide reads, in one-letter code: Pantothenate synthetase (282 aa).

26–33 (MGNLHEGH) is a binding site for ATP. Catalysis depends on H33, which acts as the Proton donor. A (R)-pantoate-binding site is contributed by Q57. A beta-alanine-binding site is contributed by Q57. 148-151 (GKKD) is a binding site for ATP. Q154 is a (R)-pantoate binding site. 185–188 (LSSR) is a binding site for ATP.

The protein belongs to the pantothenate synthetase family. As to quaternary structure, homodimer.

It is found in the cytoplasm. The enzyme catalyses (R)-pantoate + beta-alanine + ATP = (R)-pantothenate + AMP + diphosphate + H(+). It functions in the pathway cofactor biosynthesis; (R)-pantothenate biosynthesis; (R)-pantothenate from (R)-pantoate and beta-alanine: step 1/1. Its function is as follows. Catalyzes the condensation of pantoate with beta-alanine in an ATP-dependent reaction via a pantoyl-adenylate intermediate. The chain is Pantothenate synthetase from Paracidovorax citrulli (strain AAC00-1) (Acidovorax citrulli).